Consider the following 389-residue polypeptide: Chalcone synthase 9 (389 aa).

Residue Cys-164 is part of the active site.

It belongs to the thiolase-like superfamily. Chalcone/stilbene synthases family.

It carries out the reaction (E)-4-coumaroyl-CoA + 3 malonyl-CoA + 3 H(+) = 2',4,4',6'-tetrahydroxychalcone + 3 CO2 + 4 CoA. It participates in secondary metabolite biosynthesis; flavonoid biosynthesis. Its function is as follows. The primary product of this enzyme is 4,2',4',6'-tetrahydroxychalcone (also termed naringenin-chalcone or chalcone) which can under specific conditions spontaneously isomerize into naringenin. This Medicago sativa (Alfalfa) protein is Chalcone synthase 9 (CHS9).